The sequence spans 239 residues: Ribonuclease HII (239 aa).

In terms of domain architecture, RNase H type-2 spans 18-231 (KIIVGLDEAG…SKNLLKEIEE (214 aa)). Residues D24, E25, and D125 each coordinate a divalent metal cation.

This sequence belongs to the RNase HII family. Mn(2+) serves as cofactor. The cofactor is Mg(2+).

It localises to the cytoplasm. The enzyme catalyses Endonucleolytic cleavage to 5'-phosphomonoester.. Endonuclease that specifically degrades the RNA of RNA-DNA hybrids. The chain is Ribonuclease HII from Methanococcus maripaludis (strain C5 / ATCC BAA-1333).